The sequence spans 385 residues: MSDHSPLALAQALIRCPSVTPEEGGALSFLADRLSRAGFSVERPVFSEPGTPDIQNLYARIGTAGPVLVFAGHTDVVPPGEVGSWTHGPFSGEVAEGFLYGRGAVDMKGGIACMLAATLAFLDRHGPDFGGSIAFLVTGDEEGPAVNGTVKLLDWAKARGERFDHCLLGEPTNPDTLGEMIKIGRRGSLTGRITVHGRQGHVAYPHRAENPIPGLLRLASALTADPLDGGTAHFDASNLEFTTIDVGNPATNVIPASAKAVFNVRFNDDWTADTLGAEIRRRLEAAAGNAVRFSLDLQPSNSPAFLTQPDAFVDRVADAIEAETGRRPALSTTGGTSDARFIKDACPVIEFGLVGRTMHETDERVAVADLDRLTAIYGRVLDAYF.

His73 is a Zn(2+) binding site. Residue Asp75 is part of the active site. Asp106 serves as a coordination point for Zn(2+). Glu141 acts as the Proton acceptor in catalysis. Glu142, Glu170, and His359 together coordinate Zn(2+).

The protein belongs to the peptidase M20A family. DapE subfamily. In terms of assembly, homodimer. Zn(2+) is required as a cofactor. Requires Co(2+) as cofactor.

It catalyses the reaction N-succinyl-(2S,6S)-2,6-diaminopimelate + H2O = (2S,6S)-2,6-diaminopimelate + succinate. Its pathway is amino-acid biosynthesis; L-lysine biosynthesis via DAP pathway; LL-2,6-diaminopimelate from (S)-tetrahydrodipicolinate (succinylase route): step 3/3. In terms of biological role, catalyzes the hydrolysis of N-succinyl-L,L-diaminopimelic acid (SDAP), forming succinate and LL-2,6-diaminopimelate (DAP), an intermediate involved in the bacterial biosynthesis of lysine and meso-diaminopimelic acid, an essential component of bacterial cell walls. The protein is Succinyl-diaminopimelate desuccinylase of Methylorubrum extorquens (strain PA1) (Methylobacterium extorquens).